The chain runs to 344 residues: MENREVFVYIVISIFRSLQFLFWRFRPRYNDVTSALTRPLTSAASYDFKFMSYMVNKAKSVNKALEEAVPLREPELKIREAMRYTLLSDGKRVRPMLCLAACELVGGQESTAMSAACAIEMLHASSLILDDLPCMDNDSLRRGKPTNHIVFGESIAILASQALIALAVQKTTSSTFADVPPERILKTVQEMVKAVEGLVAGQQADLAGEGMRFDSDTGLEHLEFIHIHKTAALLEAAAVMGAIMGGGSDEEIERLRSYARCIGLMFQVVDDVLDVTKSSEELGKTAGKDLIAGKLTYPRLMGVEKSKEYAERLNIEAREHLLGFDIDKVAPLVSLADYIVNRQN.

The transit peptide at 1–40 (MENREVFVYIVISIFRSLQFLFWRFRPRYNDVTSALTRPL) directs the protein to the mitochondrion. Positions 91, 94, and 123 each coordinate isopentenyl diphosphate. Residues D130 and D136 each contribute to the Mg(2+) site. R141 serves as a coordination point for dimethylallyl diphosphate. R142 provides a ligand contact to isopentenyl diphosphate. Residues K229, T230, Q267, K284, and K294 each coordinate dimethylallyl diphosphate.

This sequence belongs to the FPP/GGPP synthase family. Monomer. Requires Mg(2+) as cofactor.

It is found in the mitochondrion. It carries out the reaction isopentenyl diphosphate + dimethylallyl diphosphate = (2E)-geranyl diphosphate + diphosphate. The enzyme catalyses isopentenyl diphosphate + (2E)-geranyl diphosphate = (2E,6E)-farnesyl diphosphate + diphosphate. It catalyses the reaction isopentenyl diphosphate + (2E,6E)-farnesyl diphosphate = (2E,6E,10E)-geranylgeranyl diphosphate + diphosphate. It functions in the pathway isoprenoid biosynthesis; farnesyl diphosphate biosynthesis; farnesyl diphosphate from geranyl diphosphate and isopentenyl diphosphate: step 1/1. Its pathway is isoprenoid biosynthesis; geranyl diphosphate biosynthesis; geranyl diphosphate from dimethylallyl diphosphate and isopentenyl diphosphate: step 1/1. The protein operates within isoprenoid biosynthesis; geranylgeranyl diphosphate biosynthesis; geranylgeranyl diphosphate from farnesyl diphosphate and isopentenyl diphosphate: step 1/1. Its function is as follows. Catalyzes the trans-addition of the three molecules of IPP onto DMAPP to form geranylgeranyl pyrophosphate. This chain is Geranylgeranyl pyrophosphate synthase 10, mitochondrial, found in Arabidopsis thaliana (Mouse-ear cress).